The chain runs to 203 residues: MGSQWTKDSVYRKAMKAGYRARAAYKLLEIQQRNGIIRPDDNVVDLGAAPGSWLQVLRDLTDGRVIGVDLNPIAPMEGVTTIVGDFTDPLVQERIREEAGGVVSVVVSDASPKLSGQKSYDQARAIGLGEDALAFACTVLKPGGNMVIKSFQGELFGELIAETRKHFYSVRGYRTKASRKGSAETYIIAKNFKGTCDDAEGPL.

Residues Gly51, Trp53, Asp69, Asp85, and Asp109 each contribute to the S-adenosyl-L-methionine site. The Proton acceptor role is filled by Lys149.

It belongs to the class I-like SAM-binding methyltransferase superfamily. RNA methyltransferase RlmE family.

The protein localises to the cytoplasm. It catalyses the reaction uridine(2552) in 23S rRNA + S-adenosyl-L-methionine = 2'-O-methyluridine(2552) in 23S rRNA + S-adenosyl-L-homocysteine + H(+). Specifically methylates the uridine in position 2552 of 23S rRNA at the 2'-O position of the ribose in the fully assembled 50S ribosomal subunit. In Methanoculleus marisnigri (strain ATCC 35101 / DSM 1498 / JR1), this protein is Ribosomal RNA large subunit methyltransferase E.